A 510-amino-acid chain; its full sequence is NKAP family protein (510 aa).

A compositionally biased stretch (basic and acidic residues) spans 1–22 (MSHRERDRDRDRDSDRDRDRNR). Disordered stretches follow at residues 1–128 (MSHR…VEIQ), 149–220 (ERKD…NYNG), and 239–401 (VYER…PISE). Positions 23 to 39 (YSRSRSRGSRSRSRSRS) are enriched in basic residues. The span at 40–89 (RSRDRNRNRDYNKDRSSNRDSYYNDRDYKKDRSSNRDRDYYDRDRNRDYK) shows a compositional bias: basic and acidic residues. Residues 96-105 (SSGGGGGGSG) are compositionally biased toward gly residues. Composition is skewed to low complexity over residues 112 to 123 (SSSYRESNSNNS) and 184 to 219 (NNNNRNYHGGNSRYVNNNNNNNNNNYNNNNNKSNYN). Over residues 262–273 (NKKKSKKSRRKS) the composition is skewed to basic residues. The segment covering 274–283 (SSNSDSSSSD) has biased composition (low complexity). Residues 292-322 (REKRKKSKSRKDKKKRKEKKKHQRKSSKRSS) are compositionally biased toward basic residues. Positions 342-351 (DSDRSDSEGR) are enriched in basic and acidic residues. Basic residues predominate over residues 352-367 (SRKKRSKKRSKKRHDH). Positions 368-383 (HKESVHDASMWEEKVE) are enriched in basic and acidic residues.

Belongs to the NKAP family.

In Dictyostelium discoideum (Social amoeba), this protein is NKAP family protein.